Consider the following 362-residue polypeptide: Adenosine deaminase (362 aa).

Zn(2+)-binding residues include histidine 19 and histidine 21. Substrate contacts are provided by histidine 21, aspartate 23, and glycine 181. Residue histidine 208 participates in Zn(2+) binding. Catalysis depends on glutamate 211, which acts as the Proton donor. A Zn(2+)-binding site is contributed by aspartate 300.

Belongs to the metallo-dependent hydrolases superfamily. Adenosine and AMP deaminases family. Adenosine deaminase subfamily. Zn(2+) serves as cofactor.

The catalysed reaction is adenosine + H2O + H(+) = inosine + NH4(+). The enzyme catalyses 2'-deoxyadenosine + H2O + H(+) = 2'-deoxyinosine + NH4(+). Its function is as follows. Catalyzes the hydrolytic deamination of adenosine and 2-deoxyadenosine. In Mycobacterium ulcerans (strain Agy99), this protein is Adenosine deaminase.